Here is a 58-residue protein sequence, read N- to C-terminus: UPF0434 protein Swoo_1821 (58 aa).

This sequence belongs to the UPF0434 family.

This is UPF0434 protein Swoo_1821 from Shewanella woodyi (strain ATCC 51908 / MS32).